Consider the following 327-residue polypeptide: MLCFWRTSHVAVLLIWGVFAAESSCPDKNQTMQNNSSTMTEVNTTVFVQMGKKALLCCPSISLTKVILITWTITLRGQPSCIISYKADTRETHESNCSDRSITWASTPDLAPDLQISAVALQHEGRYSCDIAVPDGNFQNIYDLQVLVPPEVTHFPGENRTAVCEAIAGKPAAQISWTPDGDCVAKNESHSNGTVTVRSTCHWEQSHVSVVFCVVSHLTTGNQSLSIELGRGGDQLLGSYIQYIIPSIIILIIIGCICLLKISGCRKCKLPKSGATPDIEEDEMQPYASYTEKSNPLYDTVTTTEAHPASQGKVNGTDCLTLSAMGI.

A signal peptide spans 1-23; the sequence is MLCFWRTSHVAVLLIWGVFAAES. Topologically, residues 24–239 are extracellular; the sequence is SCPDKNQTMQ…GRGGDQLLGS (216 aa). The region spanning 26–145 is the Ig-like V-type domain; sequence PDKNQTMQNN…GNFQNIYDLQ (120 aa). N-linked (GlcNAc...) asparagine glycans are attached at residues asparagine 29, asparagine 34, asparagine 43, asparagine 96, asparagine 159, asparagine 187, asparagine 192, and asparagine 222. Disulfide bonds link cysteine 58/cysteine 129 and cysteine 81/cysteine 97. Positions 147 to 226 constitute an Ig-like C2-type domain; sequence LVPPEVTHFP…HLTTGNQSLS (80 aa). Disulfide bonds link cysteine 164/cysteine 213 and cysteine 183/cysteine 201. A helical transmembrane segment spans residues 240–260; it reads YIQYIIPSIIILIIIGCICLL. At 261–327 the chain is on the cytoplasmic side; it reads KISGCRKCKL…DCLTLSAMGI (67 aa).

The protein belongs to the CD200R family. In terms of assembly, CD200 and CD200R1 interact via their respective N-terminal Ig-like domains. Post-translationally, phosphorylated on tyrosine residues. Highly N-glycosylated. In terms of tissue distribution, restricted to cells of the myeloid lineage.

The protein resides in the cell membrane. Its function is as follows. Inhibitory receptor for the CD200/OX2 cell surface glycoprotein. Limits inflammation by inhibiting the expression of pro-inflammatory molecules including TNF-alpha, interferons, and inducible nitric oxide synthase (iNOS) in response to selected stimuli. The chain is Cell surface glycoprotein CD200 receptor 1 (Cd200r1) from Rattus norvegicus (Rat).